The following is a 398-amino-acid chain: Succinate--CoA ligase [ADP-forming] subunit beta (398 aa).

The ATP-grasp domain occupies 9–254 (KAVLREFGVS…ETEEDAKEIE (246 aa)). ATP-binding positions include Lys-46, 53–55 (GRG), Glu-109, Ala-112, and Glu-117. Asn-209 and Asp-223 together coordinate Mg(2+). Residues Asn-274 and 331-333 (GIM) contribute to the substrate site.

The protein belongs to the succinate/malate CoA ligase beta subunit family. In terms of assembly, heterotetramer of two alpha and two beta subunits. It depends on Mg(2+) as a cofactor.

It carries out the reaction succinate + ATP + CoA = succinyl-CoA + ADP + phosphate. The enzyme catalyses GTP + succinate + CoA = succinyl-CoA + GDP + phosphate. It participates in carbohydrate metabolism; tricarboxylic acid cycle; succinate from succinyl-CoA (ligase route): step 1/1. In terms of biological role, succinyl-CoA synthetase functions in the citric acid cycle (TCA), coupling the hydrolysis of succinyl-CoA to the synthesis of either ATP or GTP and thus represents the only step of substrate-level phosphorylation in the TCA. The beta subunit provides nucleotide specificity of the enzyme and binds the substrate succinate, while the binding sites for coenzyme A and phosphate are found in the alpha subunit. The sequence is that of Succinate--CoA ligase [ADP-forming] subunit beta from Afipia carboxidovorans (strain ATCC 49405 / DSM 1227 / KCTC 32145 / OM5) (Oligotropha carboxidovorans).